The chain runs to 76 residues: Dermaseptin-H1 (76 aa).

A signal peptide spans 1–22 (MDILKKSLFIVLFLGLVSLSIC). Residues 23–45 (EEEKRENEDEEEQEDDEQSEEKR) constitute a propeptide that is removed on maturation. Positions 25 to 44 (EKRENEDEEEQEDDEQSEEK) are disordered. The segment covering 30–41 (EDEEEQEDDEQS) has biased composition (acidic residues). The residue at position 73 (Gln-73) is a Glutamine amide. Residues 75–76 (EQ) constitute a propeptide that is removed on maturation.

Expressed by the skin glands.

It localises to the secreted. In terms of biological role, has antimicrobial activity. The chain is Dermaseptin-H1 from Pithecopus hypochondrialis (Orange-legged leaf frog).